Consider the following 168-residue polypeptide: Dihydrofolate reductase (168 aa).

The DHFR domain occupies 1–164 (MIIGIWAEDE…YTFTIKKYEK (164 aa)). 5–7 (IWA) contributes to the substrate binding site. NADP(+) contacts are provided by residues 6 to 7 (WA) and 14 to 19 (IGEADK). Position 27 (Glu-27) interacts with substrate. 43–46 (GRKT) serves as a coordination point for NADP(+). Arg-58 serves as a coordination point for substrate. NADP(+) is bound by residues 63–66 (LTRD) and 99–104 (TGGAEI). Thr-118 is a binding site for substrate.

Belongs to the dihydrofolate reductase family.

The catalysed reaction is (6S)-5,6,7,8-tetrahydrofolate + NADP(+) = 7,8-dihydrofolate + NADPH + H(+). The protein operates within cofactor biosynthesis; tetrahydrofolate biosynthesis; 5,6,7,8-tetrahydrofolate from 7,8-dihydrofolate: step 1/1. Key enzyme in folate metabolism. Catalyzes an essential reaction for de novo glycine and purine synthesis, and for DNA precursor synthesis. The polypeptide is Dihydrofolate reductase (folA) (Lactococcus lactis subsp. lactis (strain IL1403) (Streptococcus lactis)).